The sequence spans 564 residues: Alpha-amylase 3 (564 aa).

The signal sequence occupies residues 1–21 (MFGVYFVLLFLSSALIHVANA). C51 and C59 are oxidised to a cystine. Residues N56 and W105 each coordinate substrate. N143 contributes to the Ca(2+) binding site. An intrachain disulfide couples C172 to C188. N181 carries N-linked (GlcNAc...) asparagine glycosylation. D198 is a Ca(2+) binding site. R227 contributes to the substrate binding site. D229 contributes to the Ca(2+) binding site. Residue D229 is the Nucleophile of the active site. 232–233 (KM) is a binding site for substrate. An N-linked (GlcNAc...) asparagine glycan is attached at N235. Ca(2+) is bound at residue E253. The active-site Proton donor is E253. C263 and C306 are joined by a disulfide. N-linked (GlcNAc...) asparagine glycans are attached at residues N282 and N305. The substrate site is built by D322 and R369. N438, N447, and N498 each carry an N-linked (GlcNAc...) asparagine glycan. The GPI-anchor amidated serine moiety is linked to residue S538. A propeptide spans 539–564 (SSRLILSFKTLVFGLGVTAMLFVLFF) (removed in mature form).

The protein belongs to the glycosyl hydrolase 13 family. Requires Ca(2+) as cofactor. In terms of processing, N-glycosylated.

It localises to the cell membrane. The enzyme catalyses Endohydrolysis of (1-&gt;4)-alpha-D-glucosidic linkages in polysaccharides containing three or more (1-&gt;4)-alpha-linked D-glucose units.. In terms of biological role, has a role in cell wall biosynthesis where it is involved in maintaining cell wall strength and shape. The sequence is that of Alpha-amylase 3 (aah3) from Schizosaccharomyces pombe (strain 972 / ATCC 24843) (Fission yeast).